A 773-amino-acid chain; its full sequence is MRNFRSSVLVVLSLIIVLNVARASAKSKVHIVYLGEKQHDDPKFVTESHHQMLSSLLGSKDDAHESMVYSYRHGFSGFAAKLTKSQAKKIADSPEVIHVIPDSYYELATTRIWDYLGPSADNSKNLVSDTNMGDQTIIGVIDTGVWPESESFNDYGVGPVPSHWKGGCEPGENFISTNCNRKLIGAKYFINGFLAENQFNATESPDYISARDFDGHGTHVASIAGGSFVPNVSYKGLGRGTLRGGAPRARIAMYKACWYINELDGVTCSFSDIMKAIDEAIHDGVDVLSISLGGRVPLNSETDLRDGIATGAFHAVAKGIVVVCAGGNAGPSSQTVVNTAPWILTVAATTLDRSFATPIILGNNQVILGQAMYIGPELGFTSLVYPEDPGNSIDTFSGVCESLNLNSNRTMAGKVVLCFTTARDFTVVSTAASIVKAAGGLGLIIARNPGYNLAPCSDDFPCVAIDNELGTDILFYIRYTGSPVVKIQPSRTLVGEPVGTKVATFSSRGPNSISPAILKPDIAAPGVSILAATSPNDTLNAGGFVMRSGTSMAAPVISGVIALLKSLHPDWSPAAFRSAIVTTAWRTDPFGEQIAAESSSLKVPDPFDYGGGLVNPEKAAEPGLILDMDSQDYVLYLCSAGYNDSSISRLVGKVTVCSNPKPSVLDINLPSITIPNLKDEVTLTRTVTNVGPVDSVYKVLVEPPLGIQVVVTPETLVFNSKTKSVSFTVIVSTTHKINTGFYFGSLTWTDSIHNVVIPVSVRTQILQNYYDEN.

Positions 1-23 (MRNFRSSVLVVLSLIIVLNVARA) are cleaved as a signal peptide. Residues 24-108 (SAKSKVHIVY…VIPDSYYELA (85 aa)) constitute a propeptide, activation peptide. The Inhibitor I9 domain occupies 29–108 (VHIVYLGEKQ…VIPDSYYELA (80 aa)). In terms of domain architecture, Peptidase S8 spans 112-620 (IWDYLGPSAD…GGLVNPEKAA (509 aa)). Catalysis depends on aspartate 142, which acts as the Charge relay system. Asparagine 200 carries N-linked (GlcNAc...) asparagine glycosylation. Histidine 216 (charge relay system) is an active-site residue. 3 N-linked (GlcNAc...) asparagine glycosylation sites follow: asparagine 231, asparagine 408, and asparagine 536. A PA domain is found at 382–474 (SLVYPEDPGN…IDNELGTDIL (93 aa)). Catalysis depends on serine 551, which acts as the Charge relay system. Asparagine 643 carries an N-linked (GlcNAc...) asparagine glycan.

This sequence belongs to the peptidase S8 family.

The protein localises to the secreted. The protein is Subtilisin-like protease SBT3.4 of Arabidopsis thaliana (Mouse-ear cress).